A 100-amino-acid polypeptide reads, in one-letter code: RING finger protein Z (100 aa).

Residue Gly-2 is the site of N-myristoyl glycine; by host attachment. The segment at 43–79 (CRCCWFANTNLIKCSDHYICLKCLNIMLGKSSFCDIC) adopts an RING-type; atypical zinc-finger fold. The PTAP/PSAP motif signature appears at 93–96 (PSAP).

Belongs to the arenaviridae Z protein family. In terms of assembly, interacts with protein NP; this interaction probably directs the encapsidated genome to budding sites. Interacts (via RING domain) with polymerase L; this interaction inhibits viral transcription and replication, Z partially blocks the product exit tunnel for the releasing nascent RNA product. Interacts with the glycoprotein complex; this interaction plays a role in virion budding. Interacts with host eIF4E; this interaction results in eIF4E reduced affinity for its substrate, the 5'-m7 G cap structure. Interacts (via late-budding domain) with host TSG101; this interaction is essential for budding and release of viral particles. Interacts with host RPLP0; this interaction may serve to load ribosome-like particles inside the virion. Interacts with host PML; this interaction induces PML bodies redistribution in the cytoplasm upon viral infection. In terms of processing, myristoylation is required for the role of RING finger protein Z in assembly and budding.

The protein localises to the virion. The protein resides in the host cytoplasm. Its subcellular location is the host perinuclear region. It is found in the host cell membrane. Plays a crucial role in virion assembly and budding. Expressed late in the virus life cycle, it acts as an inhibitor of viral transcription and RNA synthesis by interacting with the viral polymerase L. Presumably recruits the NP encapsidated genome to cellular membranes at budding sites via direct interaction with NP. Plays critical roles in the final steps of viral release by interacting with host TSG101, a member of the vacuolar protein-sorting pathway and using other cellular host proteins involved in vesicle formation pathway. The budding of the virus progeny occurs after association of protein Z with the viral glycoprotein complex SSP-GP1-GP2 at the cell periphery, step that requires myristoylation of protein Z. Also selectively represses protein production by associating with host eIF4E. In cell-based minigenome assay, has an inhibitory effect on the ribonucleoprotein machinery (vRNP), which is responsible for the replication and transcription of the viral genome. The sequence is that of RING finger protein Z from Homo sapiens (Human).